We begin with the raw amino-acid sequence, 525 residues long: Putative EGF-like domain-containing protein R659 (525 aa).

An N-terminal signal peptide occupies residues 1–24 (MGNKWCGIFLTILLLAQMSQTIFG). N-linked (GlcNAc...) asparagine; by host glycans are attached at residues N60, N77, N171, N181, N268, and N281. Positions 317–359 (LTQGCGNCDSNAECVFVSGSNSIVPKYQCKCKSGYVGNGTHCS) constitute an EGF-like domain. 3 disulfides stabilise this stretch: C321-C330, C324-C345, and C347-C358. Residues N354 and N411 are each glycosylated (N-linked (GlcNAc...) asparagine; by host).

The protein resides in the secreted. The chain is Putative EGF-like domain-containing protein R659 from Acanthamoeba polyphaga (Amoeba).